The following is a 137-amino-acid chain: Small ribosomal subunit protein uS12 (137 aa).

Positions 1-26 (MPTINQLVRKPRQSKIKKSTSPALNK) are disordered. Positions 9–18 (RKPRQSKIKK) are enriched in basic residues.

This sequence belongs to the universal ribosomal protein uS12 family. In terms of assembly, part of the 30S ribosomal subunit. Contacts proteins S8 and S17. May interact with IF1 in the 30S initiation complex.

Functionally, with S4 and S5 plays an important role in translational accuracy. In terms of biological role, interacts with and stabilizes bases of the 16S rRNA that are involved in tRNA selection in the A site and with the mRNA backbone. Located at the interface of the 30S and 50S subunits, it traverses the body of the 30S subunit contacting proteins on the other side and probably holding the rRNA structure together. The combined cluster of proteins S8, S12 and S17 appears to hold together the shoulder and platform of the 30S subunit. In Listeria innocua serovar 6a (strain ATCC BAA-680 / CLIP 11262), this protein is Small ribosomal subunit protein uS12.